The chain runs to 38 residues: MDWRVVVVLAPVIIAGSWAIFNIAAAALNQLRNMQTKK.

A helical membrane pass occupies residues Val-5–Ile-23.

This sequence belongs to the PsbY family. As to quaternary structure, PSII is composed of 1 copy each of membrane proteins PsbA, PsbB, PsbC, PsbD, PsbE, PsbF, PsbH, PsbI, PsbJ, PsbK, PsbL, PsbM, PsbT, PsbX, PsbY, PsbZ, Psb30/Ycf12, peripheral proteins PsbO, CyanoQ (PsbQ), PsbU, PsbV and a large number of cofactors. It forms dimeric complexes.

The protein localises to the cellular thylakoid membrane. Its function is as follows. Loosely associated component of the core of photosystem II (PSII), it is not always seen in crystals. PSII is a light-driven water plastoquinone oxidoreductase, using light energy to abstract electrons from H(2)O, generating a proton gradient subsequently used for ATP formation. The protein is Photosystem II reaction center protein Y of Picosynechococcus sp. (strain ATCC 27264 / PCC 7002 / PR-6) (Agmenellum quadruplicatum).